The primary structure comprises 485 residues: UDP-N-acetylmuramoyl-L-alanyl-D-glutamate--2,6-diaminopimelate ligase (485 aa).

Residue S28 coordinates UDP-N-acetyl-alpha-D-muramoyl-L-alanyl-D-glutamate. 108-114 is a binding site for ATP; that stretch reads GTNGKTS. UDP-N-acetyl-alpha-D-muramoyl-L-alanyl-D-glutamate is bound by residues N147, 148 to 149, S175, and R183; that span reads TT. An N6-carboxylysine modification is found at K215. Meso-2,6-diaminopimelate-binding positions include R374, 398-401, G449, and E453; that span reads DNPR. Residues 398–401 carry the Meso-diaminopimelate recognition motif motif; it reads DNPR.

Belongs to the MurCDEF family. MurE subfamily. Requires Mg(2+) as cofactor. Carboxylation is probably crucial for Mg(2+) binding and, consequently, for the gamma-phosphate positioning of ATP.

The protein resides in the cytoplasm. The catalysed reaction is UDP-N-acetyl-alpha-D-muramoyl-L-alanyl-D-glutamate + meso-2,6-diaminopimelate + ATP = UDP-N-acetyl-alpha-D-muramoyl-L-alanyl-gamma-D-glutamyl-meso-2,6-diaminopimelate + ADP + phosphate + H(+). Its pathway is cell wall biogenesis; peptidoglycan biosynthesis. Functionally, catalyzes the addition of meso-diaminopimelic acid to the nucleotide precursor UDP-N-acetylmuramoyl-L-alanyl-D-glutamate (UMAG) in the biosynthesis of bacterial cell-wall peptidoglycan. The chain is UDP-N-acetylmuramoyl-L-alanyl-D-glutamate--2,6-diaminopimelate ligase from Fusobacterium nucleatum subsp. nucleatum (strain ATCC 25586 / DSM 15643 / BCRC 10681 / CIP 101130 / JCM 8532 / KCTC 2640 / LMG 13131 / VPI 4355).